A 312-amino-acid polypeptide reads, in one-letter code: Olfactory receptor OR51C1 (312 aa).

Residues 1 to 26 lie on the Extracellular side of the membrane; sequence MGSNITSTSIIFLLTGVPGLEAFHTW. The helical transmembrane segment at 27–47 threads the bilayer; the sequence is ISIPFCFLSVTALLGNSLILF. Over 48-66 the chain is Cytoplasmic; that stretch reads ATITQPSLHEPMYYFLSML. Residues 67–87 traverse the membrane as a helical segment; the sequence is SATDLGLSISTLVTMLSIFWF. Topologically, residues 88 to 99 are extracellular; sequence NVREISFNACLS. Cysteine 97 and cysteine 179 are oxidised to a cystine. The helical transmembrane segment at 100 to 120 threads the bilayer; sequence HMFFIKFFTVMESSVLLAMAF. Over 121 to 143 the chain is Cytoplasmic; that stretch reads DRFVAVSNPLRYAMILTDSRIAQ. A helical transmembrane segment spans residues 144 to 164; sequence IGVASVIRGLLMLTPMVALLI. Topologically, residues 165–201 are extracellular; the sequence is RLSYCHSQVLHHSYCYHPDVMKLSCTDTRINSAVGLT. Residues 202 to 222 form a helical membrane-spanning segment; sequence AMFSTVGVDLLLILLSYVLII. Topologically, residues 223 to 240 are cytoplasmic; the sequence is RTVLSVASPEERKETFST. The helical transmembrane segment at 241 to 261 threads the bilayer; sequence CVSHIVAFAIYYIPLISLSIV. Topologically, residues 262–273 are extracellular; the sequence is HRFGKQAPAYVH. Residues 274–294 form a helical membrane-spanning segment; it reads TMIANTYLLISPLMNPVIYSV. Residues 295-312 are Cytoplasmic-facing; that stretch reads KTKQIRRAVIKILHSKET.

The protein belongs to the G-protein coupled receptor 1 family.

It localises to the membrane. Its function is as follows. Odorant receptor. This chain is Olfactory receptor OR51C1, found in Homo sapiens (Human).